We begin with the raw amino-acid sequence, 21 residues long: Peptide PGLa-BM2 (21 aa).

Alanine 21 is subject to Alanine amide.

In terms of tissue distribution, expressed by the skin glands.

It localises to the secreted. Functionally, antimicrobial peptide. This Xenopus boumbaensis (Mawa clawed frog) protein is Peptide PGLa-BM2.